The primary structure comprises 300 residues: Zinc finger CCCH-type antiviral protein 1-like (300 aa).

A2 carries the N-acetylalanine modification. Positions 252–263 (NTDNSSPSTEHS) are enriched in polar residues. The tract at residues 252–300 (NTDNSSPSTEHSQGLEKQGVHAAGAAEAGPLASVPAQSAKKPCPVSCEK) is disordered. The segment covering 271–283 (VHAAGAAEAGPLA) has biased composition (low complexity).

In Homo sapiens (Human), this protein is Zinc finger CCCH-type antiviral protein 1-like (ZC3HAV1L).